The following is a 91-amino-acid chain: UPF0250 protein Psyr_4360 (91 aa).

It belongs to the UPF0250 family.

The polypeptide is UPF0250 protein Psyr_4360 (Pseudomonas syringae pv. syringae (strain B728a)).